The chain runs to 359 residues: E3 ubiquitin-protein ligase RNF146 (359 aa).

The RING-type zinc-finger motif lies at 36–74; sequence CAICLQTCVHPVSLPCKHVFCYLCVKGASWLGKRCALCR. Residues K84 and K94 each participate in a glycyl lysine isopeptide (Lys-Gly) (interchain with G-Cter in ubiquitin) cross-link. Residues 91 to 167 form the WWE domain; sequence EELKAASRGN…EHGRRRKIKR (77 aa). Positions 107, 110, and 114 each coordinate a glycoprotein. K130 participates in a covalent cross-link: Glycyl lysine isopeptide (Lys-Gly) (interchain with G-Cter in ubiquitin). 4 residues coordinate a glycoprotein: Y144, Q153, R163, and K175. A Glycyl lysine isopeptide (Lys-Gly) (interchain with G-Cter in ubiquitin) cross-link involves residue K175. Positions 259–359 are disordered; sequence ERSHRGEGEE…PDGQCTVTEV (101 aa). Residues 284-298 show a composition bias toward acidic residues; it reads SVEETESDASSDSED. S290 and S294 each carry phosphoserine. Over residues 306-322 the composition is skewed to polar residues; sequence HSLTQQRLLVPNANQTV.

As to quaternary structure, can form homooligomers. Interacts with PARsylated AXIN1, AXIN2, BLZF1, CASC3, H1-2, IPO7, LIG3, NCL, PARP1, XRCC1, XRCC5 and XRCC6. Interacts with DDB1, DHX15, IQGAP1, LRPPRC, PARP2, PRKDC, RUVBL2, TNKS1 and TNKS2. Binding often leads to interactor ubiquitination, in the presence of the appropriate E1 and E2 enzymes, and proteasomal degradation. Ubiquitinated; autoubiquitinated. Autoubiquitination is enhanced upon poly(ADP-ribose)-binding.

Its subcellular location is the cytoplasm. It localises to the cytosol. The protein localises to the nucleus. It catalyses the reaction S-ubiquitinyl-[E2 ubiquitin-conjugating enzyme]-L-cysteine + [acceptor protein]-L-lysine = [E2 ubiquitin-conjugating enzyme]-L-cysteine + N(6)-ubiquitinyl-[acceptor protein]-L-lysine.. Its pathway is protein modification; protein ubiquitination. E3 ubiquitin-protein ligase that specifically binds poly-ADP-ribosylated (PARsylated) proteins and mediates their ubiquitination and subsequent degradation. May regulate many important biological processes, such as cell survival and DNA damage response. Acts as an activator of the Wnt signaling pathway by mediating the ubiquitination of PARsylated AXIN1 and AXIN2, 2 key components of the beta-catenin destruction complex. Acts in cooperation with tankyrase proteins (TNKS and TNKS2), which mediate PARsylation of target proteins AXIN1, AXIN2, BLZF1, CASC3, TNKS and TNKS2. Recognizes and binds tankyrase-dependent PARsylated proteins via its WWE domain and mediates their ubiquitination, leading to their degradation. Different ubiquitin linkage types have been observed: TNKS2 undergoes ubiquitination at 'Lys-48' and 'Lys-63', while AXIN1 is only ubiquitinated at 'Lys-48'. May regulate TNKS and TNKS2 subcellular location, preventing aggregation at a centrosomal location. Neuroprotective protein. Protects the brain against N-methyl-D-aspartate (NMDA) receptor-mediated glutamate excitotoxicity and ischemia, by interfering with PAR-induced cell death, called parthanatos. Prevents nuclear translocation of AIFM1 in a PAR-binding dependent manner. Does not affect PARP1 activation. Protects against cell death induced by DNA damaging agents, such as N-methyl-N-nitro-N-nitrosoguanidine (MNNG) and rescues cells from G1 arrest. Promotes cell survival after gamma-irradiation. Facilitates DNA repair. The chain is E3 ubiquitin-protein ligase RNF146 (RNF146) from Ailuropoda melanoleuca (Giant panda).